We begin with the raw amino-acid sequence, 25 residues long: LSCKRGTCHFGRCPSHLIKGSCSGG.

It localises to the secreted. In terms of biological role, bactericidal activity; inhibits Staphylococcus aureus. In Meleagris gallopavo (Wild turkey), this protein is Antimicrobial peptide THP3.